Here is a 1289-residue protein sequence, read N- to C-terminus: Outer capsid protein lambda-2 (1289 aa).

Glycine 893–serine 900 is a binding site for ATP.

This sequence belongs to the orthoreovirus lambda-2 protein family. Interacts with protein mu-NS; in viral inclusions.

Its subcellular location is the virion. The enzyme catalyses a 5'-end diphospho-ribonucleoside in mRNA + GTP + H(+) = a 5'-end (5'-triphosphoguanosine)-ribonucleoside in mRNA + diphosphate. It carries out the reaction a 5'-end (5'-triphosphoguanosine)-ribonucleoside in mRNA + S-adenosyl-L-methionine = a 5'-end (N(7)-methyl 5'-triphosphoguanosine)-ribonucleoside in mRNA + S-adenosyl-L-homocysteine. Functionally, outer capsid protein involved in mRNA capping. Catalyzes the last 3 enzymatic activities for formation of the 5' cap structure on the viral plus-strand transcripts, namely the RNA guanylyltransferase, RNA-7N- and RNA-2'O-methyltransferase activities. This is Outer capsid protein lambda-2 (L2) from Reovirus type 1 (strain Lang) (T1L).